The primary structure comprises 37 residues: Cytochrome b6-f complex subunit 5 (37 aa).

A helical transmembrane segment spans residues 5–25 (LLSGIVLGLVPVTITGLFVAA).

The protein belongs to the PetG family. In terms of assembly, the 4 large subunits of the cytochrome b6-f complex are cytochrome b6, subunit IV (17 kDa polypeptide, PetD), cytochrome f and the Rieske protein, while the 4 small subunits are PetG, PetL, PetM and PetN. The complex functions as a dimer.

It localises to the plastid. Its subcellular location is the chloroplast thylakoid membrane. Component of the cytochrome b6-f complex, which mediates electron transfer between photosystem II (PSII) and photosystem I (PSI), cyclic electron flow around PSI, and state transitions. PetG is required for either the stability or assembly of the cytochrome b6-f complex. The protein is Cytochrome b6-f complex subunit 5 of Emiliania huxleyi (Coccolithophore).